The following is a 211-amino-acid chain: Large ribosomal subunit protein uL3 (211 aa).

The protein belongs to the universal ribosomal protein uL3 family. Part of the 50S ribosomal subunit. Forms a cluster with proteins L14 and L19.

Functionally, one of the primary rRNA binding proteins, it binds directly near the 3'-end of the 23S rRNA, where it nucleates assembly of the 50S subunit. The polypeptide is Large ribosomal subunit protein uL3 (Halothermothrix orenii (strain H 168 / OCM 544 / DSM 9562)).